The following is a 365-amino-acid chain: Phospho-N-acetylmuramoyl-pentapeptide-transferase (365 aa).

10 consecutive transmembrane segments (helical) span residues 22 to 42 (YISV…LALG), 74 to 94 (TMGG…WGDL), 95 to 115 (TSIY…IGFF), 134 to 154 (KFAL…YLLS), 168 to 188 (SLYI…IING), 201 to 221 (GLAI…AYIE), 240 to 260 (LAEV…FLWF), 267 to 287 (VFMG…IAVM), 292 to 312 (LIFF…MLQV), and 342 to 362 (KVVI…LAAI).

The protein belongs to the glycosyltransferase 4 family. MraY subfamily. Mg(2+) is required as a cofactor.

It localises to the cell inner membrane. It carries out the reaction UDP-N-acetyl-alpha-D-muramoyl-L-alanyl-gamma-D-glutamyl-meso-2,6-diaminopimeloyl-D-alanyl-D-alanine + di-trans,octa-cis-undecaprenyl phosphate = di-trans,octa-cis-undecaprenyl diphospho-N-acetyl-alpha-D-muramoyl-L-alanyl-D-glutamyl-meso-2,6-diaminopimeloyl-D-alanyl-D-alanine + UMP. The protein operates within cell wall biogenesis; peptidoglycan biosynthesis. Its function is as follows. Catalyzes the initial step of the lipid cycle reactions in the biosynthesis of the cell wall peptidoglycan: transfers peptidoglycan precursor phospho-MurNAc-pentapeptide from UDP-MurNAc-pentapeptide onto the lipid carrier undecaprenyl phosphate, yielding undecaprenyl-pyrophosphoryl-MurNAc-pentapeptide, known as lipid I. The protein is Phospho-N-acetylmuramoyl-pentapeptide-transferase of Francisella tularensis subsp. mediasiatica (strain FSC147).